We begin with the raw amino-acid sequence, 398 residues long: Dihydroorotase (398 aa).

Zn(2+) is bound by residues H58 and H60. Substrate-binding positions include H60–R62 and N92. Zn(2+) contacts are provided by D151, H178, and H215. N256 contributes to the substrate binding site. D283 serves as a coordination point for Zn(2+). Residue D283 is part of the active site. Residues H287 and P297–G298 each bind substrate.

The protein belongs to the metallo-dependent hydrolases superfamily. DHOase family. Class I DHOase subfamily. Zn(2+) is required as a cofactor.

The catalysed reaction is (S)-dihydroorotate + H2O = N-carbamoyl-L-aspartate + H(+). It participates in pyrimidine metabolism; UMP biosynthesis via de novo pathway; (S)-dihydroorotate from bicarbonate: step 3/3. In terms of biological role, catalyzes the reversible cyclization of carbamoyl aspartate to dihydroorotate. The polypeptide is Dihydroorotase (Clostridium botulinum (strain Eklund 17B / Type B)).